The chain runs to 942 residues: Replicase polyprotein P2AB (942 aa).

The next 2 membrane-spanning stretches (helical) occupy residues 10 to 30 and 41 to 61; these read KSVM…ISVA and TLIC…CAVC. Residues 129-326 form the Peptidase S39 domain; it reads VENSRLQPLE…TVENSELYPD (198 aa). Active-site for protease activity residues include histidine 176, aspartate 209, and serine 276. A Phosphothreonine; by host modification is found at threonine 339. Residue serine 390 is modified to Phosphoserine; by host. Residues 691 to 805 enclose the RdRp catalytic domain; the sequence is HPGAMADISG…GWVDDAPRKY (115 aa). The disordered stretch occupies residues 888–917; it reads GNDGEERSSNESPATTKTQGSAAAWGPPQE. Over residues 897 to 908 the composition is skewed to polar residues; that stretch reads NESPATTKTQGS.

The polyprotein is proteolytically cleaved into several chains by the viral protease.

It localises to the host membrane. It carries out the reaction RNA(n) + a ribonucleoside 5'-triphosphate = RNA(n+1) + diphosphate. Functionally, responsible for cleavage of polyprotein P2A and replicase polyprotein P2AB. Its function is as follows. Covalently attached to the 5' extremity of the genomic and subgenomic RNAs. It may serve as a primer for the replicase. In terms of biological role, replicates the viral genome. The sequence is that of Replicase polyprotein P2AB from Dactylis glomerata (Orchard grass).